A 456-amino-acid chain; its full sequence is RNA polymerase II-associated protein 1 homolog (456 aa).

The tract at residues 382–456 is disordered; it reads LRSVEGSLNE…PVEQLQNEED (75 aa). S388 is modified (phosphoserine). A compositionally biased stretch (basic and acidic residues) spans 396–406; it reads EEKPAESREQL. Polar residues-rich tracts occupy residues 408-433 and 441-456; these read SAEQ…QANS and GNTQ…NEED.

The protein belongs to the PAF1 family.

The protein localises to the cytoplasm. The protein resides in the nucleus. This is RNA polymerase II-associated protein 1 homolog from Schizosaccharomyces pombe (strain 972 / ATCC 24843) (Fission yeast).